The sequence spans 200 residues: 3-isopropylmalate dehydratase small subunit (200 aa).

The protein belongs to the LeuD family. LeuD type 1 subfamily. In terms of assembly, heterodimer of LeuC and LeuD.

The enzyme catalyses (2R,3S)-3-isopropylmalate = (2S)-2-isopropylmalate. Its pathway is amino-acid biosynthesis; L-leucine biosynthesis; L-leucine from 3-methyl-2-oxobutanoate: step 2/4. Its function is as follows. Catalyzes the isomerization between 2-isopropylmalate and 3-isopropylmalate, via the formation of 2-isopropylmaleate. The sequence is that of 3-isopropylmalate dehydratase small subunit from Erythrobacter litoralis (strain HTCC2594).